We begin with the raw amino-acid sequence, 154 residues long: uncharacterized protein (154 aa).

This is an uncharacterized protein from Sulfolobus islandicus rod-shaped virus 1 (SIRV-1).